Reading from the N-terminus, the 950-residue chain is Protocadherin alpha-9 (950 aa).

Residues 1-29 (MLYSSRGDPEGQPLLLSLLILAMWVVGSG) form the signal peptide. 6 Cadherin domains span residues 30 to 133 (QLHY…PPVF), 134 to 242 (PATQ…APVF), 243 to 350 (DRTL…APQL), 351 to 455 (TIKT…APAF), 456 to 565 (AQPE…APAL), and 588 to 678 (GVVV…APKS). Residues 30–697 (QLHYSVPEEA…GPEVTLVDVN (668 aa)) are Extracellular-facing. Asn-254 and Asn-265 each carry an N-linked (GlcNAc...) asparagine glycan. Asn-548 carries an N-linked (GlcNAc...) asparagine glycan. The chain crosses the membrane as a helical span at residues 698–718 (VYLIIAICAVSSLLVLTLLLY). Residues 719 to 950 (TVLRCSAMPT…GNSTTDNSDQ (232 aa)) lie on the Cytoplasmic side of the membrane. The PXXP 1 repeat unit spans residues 734–737 (PGKP). The tract at residues 734-894 (PGKPTLVCSS…PDKFIIPGSP (161 aa)) is 5 X 4 AA repeats of P-X-X-P. Disordered regions lie at residues 759-808 (CSGE…DWRY) and 827-950 (ILRA…NSDQ). A compositionally biased stretch (polar residues) spans 789–798 (PSASSDSSGK). PXXP repeat units follow at residues 799-802 (PRQP), 832-835 (PGGP), 873-876 (PGNP), and 891-894 (PGSP). The span at 909-923 (DKSDFITFGKKEETK) shows a compositional bias: basic and acidic residues.

Its subcellular location is the cell membrane. Potential calcium-dependent cell-adhesion protein. May be involved in the establishment and maintenance of specific neuronal connections in the brain. This chain is Protocadherin alpha-9 (PCDHA9), found in Pan troglodytes (Chimpanzee).